We begin with the raw amino-acid sequence, 217 residues long: Somatotropin (217 aa).

The N-terminal stretch at 1-26 (MATGSHTTTLLLAVALLGLPWPQEAG) is a signal peptide. Residue His46 coordinates Zn(2+). Cys79 and Cys190 are disulfide-bonded. Glu199 is a binding site for Zn(2+). Residues Cys207 and Cys215 are joined by a disulfide bond.

Belongs to the somatotropin/prolactin family.

The protein resides in the secreted. Functionally, plays an important role in growth control. Its major role in stimulating body growth is to stimulate the liver and other tissues to secrete IGF1. It stimulates both the differentiation and proliferation of myoblasts. It also stimulates amino acid uptake and protein synthesis in muscle and other tissues. The chain is Somatotropin (GH1) from Galago senegalensis (Northern lesser bushbaby).